The chain runs to 91 residues: UPF0250 protein PFLU_5418 (91 aa).

It belongs to the UPF0250 family.

This is UPF0250 protein PFLU_5418 from Pseudomonas fluorescens (strain SBW25).